The following is a 506-amino-acid chain: Tyrosine-protein kinase isoform SRK4 (506 aa).

Polar residues-rich tracts occupy residues 1-10 (MGSCCSSQDG) and 18-31 (AGST…SQSV). Residues 1-53 (MGSCCSSQDGDGNGKATAGSTVDSHELSQSVKGKIKQPEPKPKPPPQVPPAQD) are disordered. An SH3 domain is found at 54–116 (VKYPIYVGKY…PSNYVAEYKS (63 aa)). The 93-residue stretch at 122 to 214 (WFFGQVKRVD…GLCVNLKGPC (93 aa)) folds into the SH2 domain. A Protein kinase domain is found at 240–493 (IKLLRGLGAG…TLSWQLEEFF (254 aa)). ATP-binding positions include 246–254 (LGAGQFGEV) and lysine 268. Catalysis depends on aspartate 359, which acts as the Proton acceptor.

This sequence belongs to the protein kinase superfamily. Tyr protein kinase family.

It is found in the cytoplasm. It carries out the reaction L-tyrosyl-[protein] + ATP = O-phospho-L-tyrosyl-[protein] + ADP + H(+). In Spongilla lacustris (Freshwater sponge), this protein is Tyrosine-protein kinase isoform SRK4 (SRK1).